We begin with the raw amino-acid sequence, 456 residues long: Ribulose bisphosphate carboxylase large chain (456 aa).

Lys-7 carries the N6,N6,N6-trimethyllysine modification. Positions 116 and 166 each coordinate substrate. Lys-168 acts as the Proton acceptor in catalysis. Lys-170 contributes to the substrate binding site. Lys-194, Asp-196, and Glu-197 together coordinate Mg(2+). Lys-194 is modified (N6-carboxylysine). Residue His-287 is the Proton acceptor of the active site. Substrate contacts are provided by Arg-288, His-320, and Ser-372.

It belongs to the RuBisCO large chain family. Type I subfamily. Heterohexadecamer of 8 large chains and 8 small chains; disulfide-linked. The disulfide link is formed within the large subunit homodimers. The cofactor is Mg(2+). In terms of processing, the disulfide bond which can form in the large chain dimeric partners within the hexadecamer appears to be associated with oxidative stress and protein turnover.

Its subcellular location is the plastid. It localises to the chloroplast. It carries out the reaction 2 (2R)-3-phosphoglycerate + 2 H(+) = D-ribulose 1,5-bisphosphate + CO2 + H2O. The enzyme catalyses D-ribulose 1,5-bisphosphate + O2 = 2-phosphoglycolate + (2R)-3-phosphoglycerate + 2 H(+). Functionally, ruBisCO catalyzes two reactions: the carboxylation of D-ribulose 1,5-bisphosphate, the primary event in carbon dioxide fixation, as well as the oxidative fragmentation of the pentose substrate in the photorespiration process. Both reactions occur simultaneously and in competition at the same active site. The sequence is that of Ribulose bisphosphate carboxylase large chain from Barnardia japonica (Chinese squill).